Reading from the N-terminus, the 586-residue chain is MRLLFAIALLGAVFAEDAWKAANVDRTIDATSQIVKVSTLYSFENVGNGPQSKVLIALSKEESATLSFISAGIDGSKGKLKISEKPAEKDLAVYEVDLRTPVAKGAKVTIRINLRITQVLEPLPSKIQQSDSQFVVLHTSAYVPSLYETVTQKTTIRTTQGGKLLSATTVSPSKQETERVIYGPYVNIPAFETKPVKVHYENNSPFVIATIVERFIEVSHWGNIAVEEYIELVHKGAELDGPFSRIDYQMDRRGRRQPALQQFTTVLPAQAKDIYYRDEIGNISTSAVRIRADSVDVEIRPRFPLFGGWKTSYVIGYNLPSEEYLYSKGNQYALKTKLFDHVFNDIVVEKLRTKVLLPEHVKRVKVATPYAVDRRPEELKPTYLDTTGRLVLVLEKENIVPDHSQFFTVTYEFEFVDMLREPLLASAFFFSLFFVIIVYSRFDFTISSDPAKDAEERSQIILGNLAKSVDSKQSAYEDLIEASQQYKSTKNDADLQEAKKTFIAARNQENSTLTDKIATLKTDSGASAAEKASELLKYDKTVFDAVDNYLKAVEKSTTKTAGTEEQQFLNKVKDARNRADSVLASI.

Positions 1–15 (MRLLFAIALLGAVFA) are cleaved as a signal peptide. The Lumenal segment spans residues 16–421 (EDAWKAANVD…EFEFVDMLRE (406 aa)). The helical transmembrane segment at 422–442 (PLLASAFFFSLFFVIIVYSRF) threads the bilayer. At 443–586 (DFTISSDPAK…NRADSVLASI (144 aa)) the chain is on the cytoplasmic side.

Belongs to the OST1 family. In terms of assembly, component of the oligosaccharyltransferase (OST) complex.

The protein localises to the endoplasmic reticulum membrane. It localises to the cytoplasmic granule. It participates in protein modification; protein glycosylation. Its function is as follows. Subunit of the oligosaccharyl transferase (OST) complex that catalyzes the initial transfer of a defined glycan (Glc(3)Man(9)GlcNAc(2) in eukaryotes) from the lipid carrier dolichol-pyrophosphate to an asparagine residue within an Asn-X-Ser/Thr consensus motif in nascent polypeptide chains, the first step in protein N-glycosylation. N-glycosylation occurs cotranslationally and the complex associates with the Sec61 complex at the channel-forming translocon complex that mediates protein translocation across the endoplasmic reticulum (ER). All subunits are required for a maximal enzyme activity. The polypeptide is Dolichyl-diphosphooligosaccharide--protein glycosyltransferase subunit 1 (Caenorhabditis elegans).